We begin with the raw amino-acid sequence, 205 residues long: Small ribosomal subunit protein bS16 (205 aa).

The interval 110–205 (GEEVKIAVGT…ADDNEEPEDE (96 aa)) is disordered. The segment covering 123–132 (DPLERERERA) has biased composition (basic and acidic residues). Residues 153-205 (EETEAEEAEDVETADAEDADAASETDEPEAAADEADETDASADADDNEEPEDE) are compositionally biased toward acidic residues.

The protein belongs to the bacterial ribosomal protein bS16 family.

The chain is Small ribosomal subunit protein bS16 from Salinibacter ruber (strain DSM 13855 / M31).